A 1007-amino-acid chain; its full sequence is Sal-like protein 2 (1007 aa).

The segment at 1–33 (MSRRKQRKPQQLISDCEGPSASENGDASEEDHP) is disordered. The C2H2-type 1; atypical zinc-finger motif lies at 34–56 (QVCAKCCAQFTDPTEFLAHQNAC). Disordered stretches follow at residues 59 to 121 (DPPV…GEES), 137 to 177 (GGGL…SGHL), 220 to 243 (PASP…PLFS), and 286 to 306 (PFSA…SPAL). Low complexity predominate over residues 70–80 (ENPNNSSASSE). A compositionally biased stretch (polar residues) spans 99 to 108 (PPDSGSSVPT). Positions 151-171 (PLPPESTPAPPPPPPPPPPPG) are enriched in pro residues. Position 243 is a phosphoserine (Ser243). 2 consecutive C2H2-type zinc fingers follow at residues 373 to 395 (HKCR…LRSH) and 401 to 423 (YKCN…FHRH). 2 disordered regions span residues 520-540 (KNKA…SGVA) and 610-629 (AASG…ASSG). 3 C2H2-type zinc fingers span residues 631–653 (NQCV…YGQH), 659–681 (FKCK…FVGH), and 691–713 (NSCP…VRMH). The tract at residues 714 to 886 (LGGQIPNGGT…SALTPEGEAT (173 aa)) is disordered. The span at 734-744 (ENGSEQSTVSG) shows a compositional bias: polar residues. Low complexity predominate over residues 747-757 (SFPQQQSQQPS). Acidic residues predominate over residues 758–782 (PEEELSEEEEEEDEEEEEDVTDEDS). 3 positions are modified to phosphoserine: Ser797, Ser802, and Ser806. Residues 803–812 (EEASGAEEEV) show a composition bias toward acidic residues. The segment covering 862 to 871 (GKEEGGKPER) has biased composition (basic and acidic residues). A Glycyl lysine isopeptide (Lys-Gly) (interchain with G-Cter in ubiquitin) cross-link involves residue Lys911. 2 consecutive C2H2-type zinc fingers follow at residues 911–933 (KACE…QKTH) and 940–963 (FTCV…LLAH).

This sequence belongs to the sal C2H2-type zinc-finger protein family. Highest levels in adult brain (in different areas). Lower levels in heart; very low levels in kidney and pancreas. Expressed throughout the retina and lens vesicle as well as the periocular mesenchyme.

The protein resides in the nucleus. Its function is as follows. Probable transcription factor that plays a role in eye development before, during, and after optic fissure closure. This is Sal-like protein 2 (SALL2) from Homo sapiens (Human).